A 375-amino-acid chain; its full sequence is Transcription factor E2F4 (375 aa).

A DNA-binding region spans residues 12–81 (SRHEKSLGLL…KNSIQWKGVG (70 aa)). Positions 39–61 (LKAAADTLAVRQKRRIYDITNVL) are leucine-zipper. The DEF box motif lies at 44-81 (DTLAVRQKRRIYDITNVLEGIGLIEKKSKNSIQWKGVG). Residues 82 to 177 (PGCNTREIAD…NTNGQKKFQI (96 aa)) form a dimerization region. Residues 197–300 (SSAPVVVPVP…PDPSTSFQPI (104 aa)) are disordered. Over residues 220 to 270 (STPQRPALTPQNDIATSPAPTVPHSTISNAESQDCPTGQTFSMENTTSSRL) the composition is skewed to polar residues. Residues 280-296 (SSASLDNSNDSPDPSTS) are compositionally biased toward low complexity. The interval 299–375 (PIKSDLSDVL…CDLFDVPINL (77 aa)) is transactivation.

The protein belongs to the E2F/DP family. In terms of assembly, component of the drtf1/e2f transcription factor complex. Component of the EDM complex, at least composed of e2f4, e2f5, mcidas and tfdp1.

Its subcellular location is the nucleus. Functionally, transcription activator that binds DNA cooperatively with DP proteins through the E2 recognition site, 5'-TTTC[CG]CGC-3' found in the promoter region of a number of genes. Component of the EDM complex, a complex specifically required for multiciliate cell differentiation: the EDM complex binds and activate genes required for centriole biogenesis. Activates genes required for centriole assembly (plk4, cep152) and genes specifically required for motile cilia formation (foxj1). Also promotes the deuterosome pathway of centriole biogenesis by activating expression of deup1, but not its paralog cep63. In Xenopus laevis (African clawed frog), this protein is Transcription factor E2F4.